We begin with the raw amino-acid sequence, 435 residues long: 3-ketoacyl-CoA thiolase (435 aa).

Residue Cys98 is the Acyl-thioester intermediate of the active site. Catalysis depends on proton acceptor residues His391 and Cys421.

It belongs to the thiolase-like superfamily. Thiolase family. As to quaternary structure, heterotetramer of two alpha chains (FadJ) and two beta chains (FadI).

It localises to the cytoplasm. It catalyses the reaction an acyl-CoA + acetyl-CoA = a 3-oxoacyl-CoA + CoA. It participates in lipid metabolism; fatty acid beta-oxidation. Its function is as follows. Catalyzes the final step of fatty acid oxidation in which acetyl-CoA is released and the CoA ester of a fatty acid two carbons shorter is formed. This chain is 3-ketoacyl-CoA thiolase, found in Vibrio cholerae serotype O1 (strain ATCC 39315 / El Tor Inaba N16961).